Consider the following 492-residue polypeptide: Bifunctional shikimate kinase/3-dehydroquinate synthase (492 aa).

A shikimate kinase region spans residues 1–161 (MRIFLVGMMG…TALVVLEALD (161 aa)). 10-15 (GSGKST) is an ATP binding site. S14 contacts Mg(2+). Substrate-binding residues include D32, R56, and G78. Position 114 (R114) interacts with ATP. Residue R131 coordinates substrate. The tract at residues 162–492 (EKEISTIEKP…DPLELLEVVD (331 aa)) is 3-dehydroquinate synthase.

The protein in the N-terminal section; belongs to the shikimate kinase family. It in the C-terminal section; belongs to the sugar phosphate cyclases superfamily. Dehydroquinate synthase family. The cofactor is Mg(2+). Requires NAD(+) as cofactor. A divalent metal cation serves as cofactor.

Its subcellular location is the cytoplasm. The catalysed reaction is 7-phospho-2-dehydro-3-deoxy-D-arabino-heptonate = 3-dehydroquinate + phosphate. It carries out the reaction shikimate + ATP = 3-phosphoshikimate + ADP + H(+). The protein operates within metabolic intermediate biosynthesis; chorismate biosynthesis; chorismate from D-erythrose 4-phosphate and phosphoenolpyruvate: step 2/7. It participates in metabolic intermediate biosynthesis; chorismate biosynthesis; chorismate from D-erythrose 4-phosphate and phosphoenolpyruvate: step 5/7. In terms of biological role, catalyzes the specific phosphorylation of the 3-hydroxyl group of shikimic acid using ATP as a cosubstrate. The polypeptide is Bifunctional shikimate kinase/3-dehydroquinate synthase (aroKB) (Thermotoga maritima (strain ATCC 43589 / DSM 3109 / JCM 10099 / NBRC 100826 / MSB8)).